A 219-amino-acid polypeptide reads, in one-letter code: Endo-type membrane-bound lytic murein transglycosylase A-like protein (219 aa).

Belongs to the transglycosylase Slt family.

The enzyme catalyses Endolytic cleavage of the (1-&gt;4)-beta-glycosidic linkage between N-acetylmuramic acid (MurNAc) and N-acetylglucosamine (GlcNAc) residues in peptidoglycan with concomitant formation of a 1,6-anhydrobond in the MurNAc residue.. Its function is as follows. Murein-degrading enzyme. May play a role in recycling of muropeptides during cell elongation and/or cell division (Potential). In Shigella flexneri, this protein is Endo-type membrane-bound lytic murein transglycosylase A-like protein.